We begin with the raw amino-acid sequence, 199 residues long: Probable GTP-binding protein EngB (199 aa).

An EngB-type G domain is found at 25–199 (IGMEVAFVGY…LKRVLNNWLR (175 aa)). Mg(2+) contacts are provided by Ser40 and Thr62.

It belongs to the TRAFAC class TrmE-Era-EngA-EngB-Septin-like GTPase superfamily. EngB GTPase family. Mg(2+) serves as cofactor.

Its function is as follows. Necessary for normal cell division and for the maintenance of normal septation. The chain is Probable GTP-binding protein EngB from Blochmanniella pennsylvanica (strain BPEN).